A 271-amino-acid polypeptide reads, in one-letter code: Glutamate racemase (271 aa).

Substrate-binding positions include 10-11 (DS) and 42-43 (YG). The active-site Proton donor/acceptor is C73. Position 74-75 (74-75 (NT)) interacts with substrate. C183 functions as the Proton donor/acceptor in the catalytic mechanism. Substrate is bound at residue 184–185 (TH).

The protein belongs to the aspartate/glutamate racemases family.

The catalysed reaction is L-glutamate = D-glutamate. It functions in the pathway cell wall biogenesis; peptidoglycan biosynthesis. In terms of biological role, provides the (R)-glutamate required for cell wall biosynthesis. In Lactococcus lactis subsp. cremoris (strain SK11), this protein is Glutamate racemase.